The sequence spans 1148 residues: MEVTNNGSNNSSTIASTNPPTSPSTTSTSKSLPPLSFLNSQWENKQSNNNNNSNNNNINNNNNNNNNNNNNNNNNNNNNNNSVKMEKLIELPSSSNNSPEFLNGVNNNNNGNNNNNNNNNNNNNNNNNNNNNNNNNNNNNNNNNNNNSGSGGNNSNNNSNISSPPSSSSTSTSVLSSSQSAYMNDKMVAATLDSIGKMESIQRKYEMQIESLMDQIQGYIEKEQKLRSQCQAVEDINAKLENENLQLKKELFEMSRKFKEIDIINLNNTNNNINNNNNNNNNNNNNNNNNSINNNNNNGFSPPPLVKYPSNGSLQQDAKRFKIMEQQSQQQQQMQQQQQIQQQKQYQQQQQQTTSKRKNNISIDGDKEALVAEALGSFVDYAKPSLKRSNSEEVFNSSVYKNKNNINNINNNSNSNNNNGNNSLLNDIQNWQQQQQQQQQLLHQRKKRKDYDYDYNSTQNGKGIPSNSSNNNSSNNNSNNNNNNNSNNNNNIIGSISPPHSSQLQQVSSPQQQQQQQKPNGLKLSISSGSIKDLINSPNKEQSSKSQYPSSLSQSSSIPDMDTDVDSTDEFDFGSNSNNNNNNNNNNNNNNNSNNSNNKKRNNSNNNNLGGDDDDSPDSNDRNGSSSPIDMEPSYDGANLFKTVTPGTITTPQEELLNEIHSLQMQQRETIEKMYIAQKQFLSDRSNGFNNNNEEILRSLQSDQTKLGSTLESELQALNQLYSQTILEPNQLCKLDILLQDVSIQLKQLHLYQMELNYGYGSNEPFPATLVIIKQPFPMVISKFKQLQEDHLCVQLLTGANVEIVSYSPIRAELVFHSKNLTKGSSNLGTQNSLKKNIEKDTQVLDPIKGVAKFPIKFLTGTRKSCVKLHFVLQIKTSDGHIINVPSSTSQPFIVITNDCQWEGSEGTLLKKETFNEKFEISWPHFVNILQKHFLKATKQSPIQPTRPLSMYDFTYLSNTFFGGKPFVSHKDFDSFWSWFGKSIQTLRYKRHISTLWQNGFIFMFLKRDVVTQILKNQDVGTFVILFSEAFPGQLEISYVGTDQKDSLSKSSNDLQSPTTTTTTTTSTRVKHYLVQANDTSGSKRTLPDFLSECNQFTHILQLNIAMIPQTETIPVFKREPKNVVLEPYYSKRQNSQNILGSGYDPLF.

Residues 1–36 show a composition bias toward low complexity; sequence MEVTNNGSNNSSTIASTNPPTSPSTTSTSKSLPPLS. Disordered stretches follow at residues 1–81, 93–178, 268–312, 403–425, and 453–645; these read MEVT…NNNN, SSSN…LSSS, NTNN…PSNG, KNNI…NSLL, and YDYN…KTVT. Residues 37 to 47 are compositionally biased toward polar residues; it reads FLNSQWENKQS. Low complexity-rich tracts occupy residues 48–81, 106–178, and 268–298; these read NNNN…NNNN, NNNN…LSSS, and NTNN…NNNN. The segment covering 466–517 has biased composition (low complexity); the sequence is SNSSNNNSSNNNSNNNNNNNSNNNNNIIGSISPPHSSQLQQVSSPQQQQQQQ. Residues 525–541 show a composition bias toward polar residues; it reads SISSGSIKDLINSPNKE. Low complexity predominate over residues 544 to 557; the sequence is SKSQYPSSLSQSSS. A compositionally biased stretch (acidic residues) spans 561-572; the sequence is MDTDVDSTDEFD. Positions 574–610 are enriched in low complexity; it reads GSNSNNNNNNNNNNNNNNNSNNSNNKKRNNSNNNNLG. An SH2 domain is found at 997-1122; it reads WQNGFIFMFL…TIPVFKREPK (126 aa).

Belongs to the transcription factor STAT family. As to quaternary structure, homodimer. Does not form heterodimers with other family members.

The protein resides in the nucleus. Its function is as follows. Transcription factor that regulates gene expression during development. Required for optimal cell growth. The polypeptide is Signal transducer and activator of transcription B (dstB) (Dictyostelium discoideum (Social amoeba)).